Consider the following 492-residue polypeptide: Bifunctional purine biosynthesis protein PurH (492 aa).

The 144-residue stretch at 1-144 (MRKALLSVSD…KNFRHVITVV (144 aa)) folds into the MGS-like domain.

The protein belongs to the PurH family.

The enzyme catalyses (6R)-10-formyltetrahydrofolate + 5-amino-1-(5-phospho-beta-D-ribosyl)imidazole-4-carboxamide = 5-formamido-1-(5-phospho-D-ribosyl)imidazole-4-carboxamide + (6S)-5,6,7,8-tetrahydrofolate. It catalyses the reaction IMP + H2O = 5-formamido-1-(5-phospho-D-ribosyl)imidazole-4-carboxamide. It functions in the pathway purine metabolism; IMP biosynthesis via de novo pathway; 5-formamido-1-(5-phospho-D-ribosyl)imidazole-4-carboxamide from 5-amino-1-(5-phospho-D-ribosyl)imidazole-4-carboxamide (10-formyl THF route): step 1/1. It participates in purine metabolism; IMP biosynthesis via de novo pathway; IMP from 5-formamido-1-(5-phospho-D-ribosyl)imidazole-4-carboxamide: step 1/1. The protein is Bifunctional purine biosynthesis protein PurH of Macrococcus caseolyticus (strain JCSC5402) (Macrococcoides caseolyticum).